Reading from the N-terminus, the 322-residue chain is 4-diphosphocytidyl-2-C-methyl-D-erythritol kinase (322 aa).

The active site involves K27. P112 to A122 serves as a coordination point for ATP. Residue D154 is part of the active site.

This sequence belongs to the GHMP kinase family. IspE subfamily.

It carries out the reaction 4-CDP-2-C-methyl-D-erythritol + ATP = 4-CDP-2-C-methyl-D-erythritol 2-phosphate + ADP + H(+). Its pathway is isoprenoid biosynthesis; isopentenyl diphosphate biosynthesis via DXP pathway; isopentenyl diphosphate from 1-deoxy-D-xylulose 5-phosphate: step 3/6. Its function is as follows. Catalyzes the phosphorylation of the position 2 hydroxy group of 4-diphosphocytidyl-2C-methyl-D-erythritol. This chain is 4-diphosphocytidyl-2-C-methyl-D-erythritol kinase, found in Mycolicibacterium smegmatis (strain ATCC 700084 / mc(2)155) (Mycobacterium smegmatis).